The chain runs to 385 residues: S-adenosylmethionine synthase (385 aa).

Position 16 (H16) interacts with ATP. Residue D18 coordinates Mg(2+). A K(+)-binding site is contributed by E44. Positions 57 and 100 each coordinate L-methionine. A flexible loop region spans residues 100–110 (QSPDINQGVDR). Residues 164 to 166 (DGK), 230 to 231 (KF), D239, 245 to 246 (RK), A262, and K266 contribute to the ATP site. Position 239 (D239) interacts with L-methionine. K270 provides a ligand contact to L-methionine.

Belongs to the AdoMet synthase family. Homotetramer; dimer of dimers. It depends on Mg(2+) as a cofactor. The cofactor is K(+).

Its subcellular location is the cytoplasm. The catalysed reaction is L-methionine + ATP + H2O = S-adenosyl-L-methionine + phosphate + diphosphate. The protein operates within amino-acid biosynthesis; S-adenosyl-L-methionine biosynthesis; S-adenosyl-L-methionine from L-methionine: step 1/1. Its function is as follows. Catalyzes the formation of S-adenosylmethionine (AdoMet) from methionine and ATP. The overall synthetic reaction is composed of two sequential steps, AdoMet formation and the subsequent tripolyphosphate hydrolysis which occurs prior to release of AdoMet from the enzyme. The protein is S-adenosylmethionine synthase of Helicobacter pylori (strain Shi470).